The following is a 384-amino-acid chain: 1-deoxy-D-xylulose 5-phosphate reductoisomerase (384 aa).

Residues threonine 10, glycine 11, serine 12, isoleucine 13, glycine 36, asparagine 38, and asparagine 122 each contribute to the NADPH site. Lysine 123 is a 1-deoxy-D-xylulose 5-phosphate binding site. Glutamate 124 is an NADPH binding site. Position 148 (aspartate 148) interacts with Mn(2+). 1-deoxy-D-xylulose 5-phosphate-binding residues include serine 149, glutamate 150, serine 174, and histidine 197. Mn(2+) is bound at residue glutamate 150. Glycine 203 contacts NADPH. 4 residues coordinate 1-deoxy-D-xylulose 5-phosphate: serine 210, asparagine 215, lysine 216, and glutamate 219. Position 219 (glutamate 219) interacts with Mn(2+).

Belongs to the DXR family. Requires Mg(2+) as cofactor. Mn(2+) is required as a cofactor.

The catalysed reaction is 2-C-methyl-D-erythritol 4-phosphate + NADP(+) = 1-deoxy-D-xylulose 5-phosphate + NADPH + H(+). It participates in isoprenoid biosynthesis; isopentenyl diphosphate biosynthesis via DXP pathway; isopentenyl diphosphate from 1-deoxy-D-xylulose 5-phosphate: step 1/6. In terms of biological role, catalyzes the NADPH-dependent rearrangement and reduction of 1-deoxy-D-xylulose-5-phosphate (DXP) to 2-C-methyl-D-erythritol 4-phosphate (MEP). The protein is 1-deoxy-D-xylulose 5-phosphate reductoisomerase of Geobacter metallireducens (strain ATCC 53774 / DSM 7210 / GS-15).